The primary structure comprises 745 residues: TonB-dependent heme receptor A (745 aa).

An N-terminal signal peptide occupies residues 1 to 24 (MNILINKRIFLLVTLVGIQLNVTA). The TBDR plug domain maps to 45 to 157 (DDSNKLPGRS…FAGTVKFETK (113 aa)). The region spanning 168 to 745 (KIGGFLKYGN…NIKFSLSQKF (578 aa)) is the TBDR beta-barrel domain.

It belongs to the TonB-dependent receptor family.

The protein localises to the cell outer membrane. Its function is as follows. Heme receptor. In Haemophilus influenzae (strain 86-028NP), this protein is TonB-dependent heme receptor A (tdhA).